A 161-amino-acid chain; its full sequence is 2-C-methyl-D-erythritol 2,4-cyclodiphosphate synthase (161 aa).

2 residues coordinate a divalent metal cation: D10 and H12. Residues 10–12 (DVH) and 36–37 (HS) contribute to the 4-CDP-2-C-methyl-D-erythritol 2-phosphate site. H44 is an a divalent metal cation binding site. 4-CDP-2-C-methyl-D-erythritol 2-phosphate-binding positions include 58–60 (DIG), 63–67 (FSDTD), and R144.

It belongs to the IspF family. In terms of assembly, homotrimer. A divalent metal cation is required as a cofactor.

The catalysed reaction is 4-CDP-2-C-methyl-D-erythritol 2-phosphate = 2-C-methyl-D-erythritol 2,4-cyclic diphosphate + CMP. It functions in the pathway isoprenoid biosynthesis; isopentenyl diphosphate biosynthesis via DXP pathway; isopentenyl diphosphate from 1-deoxy-D-xylulose 5-phosphate: step 4/6. Its function is as follows. Involved in the biosynthesis of isopentenyl diphosphate (IPP) and dimethylallyl diphosphate (DMAPP), two major building blocks of isoprenoid compounds. Catalyzes the conversion of 4-diphosphocytidyl-2-C-methyl-D-erythritol 2-phosphate (CDP-ME2P) to 2-C-methyl-D-erythritol 2,4-cyclodiphosphate (ME-CPP) with a corresponding release of cytidine 5-monophosphate (CMP). The protein is 2-C-methyl-D-erythritol 2,4-cyclodiphosphate synthase of Burkholderia lata (strain ATCC 17760 / DSM 23089 / LMG 22485 / NCIMB 9086 / R18194 / 383).